A 782-amino-acid polypeptide reads, in one-letter code: cGMP-specific 3',5'-cyclic phosphodiesterase gamma (782 aa).

The Cytoplasmic portion of the chain corresponds to 1-69 (MKHMFKNILF…LCDNMYSKKY (69 aa)). The chain crosses the membrane as a helical span at residues 70–90 (VILVSHLISLLLMYSVCLIVG). Residues 91–97 (NINDLFS) lie on the Extracellular side of the membrane. The helical transmembrane segment at 98–118 (VLKLTYILLHTFTAINIILIL) threads the bilayer. The Cytoplasmic segment spans residues 119-135 (TLHATHYVEMFKSIKGE). A helical transmembrane segment spans residues 136–156 (IFIFYIMMIFVIWCSWLFILF). Residues 157 to 181 (NNIKDLLPIVVNVNNFLYATYANNK) lie on the Extracellular side of the membrane. A helical membrane pass occupies residues 182–202 (INIVLGFFAYLPIFYLITIIP). The Cytoplasmic portion of the chain corresponds to 203 to 208 (CRICYS). Residues 209–229 (CAFDILFFIMKVAIFSVYYLI) form a helical membrane-spanning segment. The Extracellular segment spans residues 230–239 (TMKSYILTDN). Residues 240 to 260 (IFMIISALVGSLFIFVIRYII) form a helical membrane-spanning segment. Over 261–782 (EIQRRLSFHN…YAPNLNIYKL (522 aa)) the chain is Cytoplasmic. Residues 376 to 396 (GSKEEPEAESESECVDESKEG) are disordered. Over residues 381–390 (PEAESESECV) the composition is skewed to acidic residues. In terms of domain architecture, PDEase spans 423-751 (YEEKENEILK…SKWTKIEKDE (329 aa)). His504 acts as the Proton donor in catalysis. 504-508 (HNSIH) serves as a coordination point for a nucleoside 3',5'-cyclic phosphate. A divalent metal cation contacts are provided by His508, His544, Asp545, and Asp654. Residues Asp545, Asp654, and Gln706 each contribute to the a nucleoside 3',5'-cyclic phosphate site.

The protein belongs to the cyclic nucleotide phosphodiesterase family. The cofactor is a divalent metal cation.

The protein resides in the membrane. Its subcellular location is the endoplasmic reticulum membrane. It catalyses the reaction 3',5'-cyclic GMP + H2O = GMP + H(+). Its pathway is purine metabolism; 3',5'-cyclic GMP degradation; GMP from 3',5'-cyclic GMP: step 1/1. In terms of biological role, specifically hydrolyzes the second messenger cGMP, which is a key regulator of many important physiological processes. Probably by regulating cGMP levels, required for sporozoite motility and invasion of the mosquito salivary glands. The polypeptide is cGMP-specific 3',5'-cyclic phosphodiesterase gamma (Plasmodium yoelii).